Here is a 492-residue protein sequence, read N- to C-terminus: Cytochrome P450 monooxygenase rdc4 (492 aa).

Cysteine 435 serves as a coordination point for heme.

The protein belongs to the cytochrome P450 family. It depends on heme as a cofactor.

It participates in secondary metabolite biosynthesis. Functionally, cytochrome P450 monooxygenase; part of the gene cluster that mediates the biosynthesis of radicicol, a resorcylic acid lactone (RAL) that irreversibly inhibits the HSP90 molecular chaperone, an important target for cancer chemotherapy. The radicicol cluster encodes only two apparent post-PKS enzymes, a cytochrome P450 monooxygenase (rdc4) and a non-heme halogenase (rdc2) that could introduce the epoxide and the chlorine, respectively. If this cluster includes all the genes required for radicicol biosynthesis, the remaining structural features of radicicol are presumably generated by the PKSs rdc1 and rdc5. The C-2' ketone could arise if the R-PKS rdc5 and NR-PKS rdc1 each carry out four iterations, in contrast to the five iteration-three iteration split for the hypothemycin PKSs. The origin of the cis 5',6' double bond is not known. The radicicol R-PKS rdc5 ER domain may catalyze either double bond isomerization or reduction in the third iteration. In Metacordyceps chlamydosporia (Nematophagous fungus), this protein is Cytochrome P450 monooxygenase rdc4.